A 257-amino-acid polypeptide reads, in one-letter code: MTIFPLPAFNDNYIWIIQDKDSSGIWAVDPGKADVVLNFCHEYQKTLTGILITHHHKDHTGGVAELKQHSNCPVYGPEHLTELVTHPVDDGDRILVFSKVFTVIATPGHTLDHLCYFSEQETPILLSGDTLFKGGCGRIMEGTHEQMLAAMIKISGLPNDTLIYGTHEYTLANYRFALSLEPNNKDLIESNITCQKLRTEEKPTLPTKLSIEKKTNPFLRSHIEALKIQAAQQLNEIPAENPIGAFSQVRRAKDSFS.

Zn(2+) is bound by residues H54, H56, D58, H59, H109, D129, and H167.

This sequence belongs to the metallo-beta-lactamase superfamily. Glyoxalase II family. In terms of assembly, monomer. Requires Zn(2+) as cofactor.

The enzyme catalyses an S-(2-hydroxyacyl)glutathione + H2O = a 2-hydroxy carboxylate + glutathione + H(+). It participates in secondary metabolite metabolism; methylglyoxal degradation; (R)-lactate from methylglyoxal: step 2/2. Functionally, thiolesterase that catalyzes the hydrolysis of S-D-lactoyl-glutathione to form glutathione and D-lactic acid. The polypeptide is Hydroxyacylglutathione hydrolase (Marinomonas sp. (strain MWYL1)).